We begin with the raw amino-acid sequence, 272 residues long: 2-dehydro-3-deoxyphosphooctonate aldolase (272 aa).

This sequence belongs to the KdsA family.

The protein localises to the cytoplasm. It catalyses the reaction D-arabinose 5-phosphate + phosphoenolpyruvate + H2O = 3-deoxy-alpha-D-manno-2-octulosonate-8-phosphate + phosphate. It participates in carbohydrate biosynthesis; 3-deoxy-D-manno-octulosonate biosynthesis; 3-deoxy-D-manno-octulosonate from D-ribulose 5-phosphate: step 2/3. Its pathway is bacterial outer membrane biogenesis; lipopolysaccharide biosynthesis. In Geobacter sulfurreducens (strain ATCC 51573 / DSM 12127 / PCA), this protein is 2-dehydro-3-deoxyphosphooctonate aldolase.